The sequence spans 21 residues: uncharacterized protein (21 aa).

This is an uncharacterized protein from Methanococcus voltae.